Reading from the N-terminus, the 334-residue chain is Homoserine O-acetyltransferase (334 aa).

Residues 61–318 enclose the AB hydrolase-1 domain; sequence LVLHALTGDS…GSIHGHDAFL (258 aa). S148 functions as the Nucleophile in the catalytic mechanism. R205 contributes to the substrate binding site. Catalysis depends on residues D285 and H314. Substrate is bound at residue D315.

This sequence belongs to the AB hydrolase superfamily. MetX family. As to quaternary structure, homodimer.

Its subcellular location is the cytoplasm. It carries out the reaction L-homoserine + acetyl-CoA = O-acetyl-L-homoserine + CoA. Its pathway is amino-acid biosynthesis; L-methionine biosynthesis via de novo pathway; O-acetyl-L-homoserine from L-homoserine: step 1/1. Its function is as follows. Transfers an acetyl group from acetyl-CoA to L-homoserine, forming acetyl-L-homoserine. In Deinococcus radiodurans (strain ATCC 13939 / DSM 20539 / JCM 16871 / CCUG 27074 / LMG 4051 / NBRC 15346 / NCIMB 9279 / VKM B-1422 / R1), this protein is Homoserine O-acetyltransferase.